The following is a 119-amino-acid chain: Small ribosomal subunit protein bS16 (119 aa).

This sequence belongs to the bacterial ribosomal protein bS16 family.

In Chlamydia caviae (strain ATCC VR-813 / DSM 19441 / 03DC25 / GPIC) (Chlamydophila caviae), this protein is Small ribosomal subunit protein bS16.